A 228-amino-acid chain; its full sequence is Leucine rich adaptor protein 1-like (228 aa).

Residue methionine 1 is modified to N-acetylmethionine. A disordered region spans residues 1–89 (MEDSPLPDLR…GSPRGSHSSA (89 aa)). Composition is skewed to basic and acidic residues over residues 8-21 (DLRD…RKVP) and 28-42 (LRGE…DRDP). Gly residues predominate over residues 44 to 56 (GGSGGGGGGGGGC). Over residues 57-88 (SSSSSYCSFPPSLSSSSSSSPTSGSPRGSHSS) the composition is skewed to low complexity.

The polypeptide is Leucine rich adaptor protein 1-like (LURAP1L) (Homo sapiens (Human)).